A 194-amino-acid chain; its full sequence is Protein GrpE (194 aa).

The protein belongs to the GrpE family. Homodimer.

The protein resides in the cytoplasm. Its function is as follows. Participates actively in the response to hyperosmotic and heat shock by preventing the aggregation of stress-denatured proteins, in association with DnaK and GrpE. It is the nucleotide exchange factor for DnaK and may function as a thermosensor. Unfolded proteins bind initially to DnaJ; upon interaction with the DnaJ-bound protein, DnaK hydrolyzes its bound ATP, resulting in the formation of a stable complex. GrpE releases ADP from DnaK; ATP binding to DnaK triggers the release of the substrate protein, thus completing the reaction cycle. Several rounds of ATP-dependent interactions between DnaJ, DnaK and GrpE are required for fully efficient folding. The sequence is that of Protein GrpE from Aliivibrio fischeri (strain MJ11) (Vibrio fischeri).